A 676-amino-acid chain; its full sequence is RNA helicase NPH-II (676 aa).

Positions 172–347 constitute a Helicase ATP-binding domain; sequence FSAWISHRPV…VFLPNPAFIH (176 aa). 185–192 is a binding site for ATP; the sequence is GGTGVGKT. Residues 296–299 carry the DEXH box motif; that stretch reads DEVH. Positions 366–535 constitute a Helicase C-terminal domain; sequence NPSSRMAYIE…NYILYANKFN (170 aa).

It belongs to the DEAD box helicase family. DEAH subfamily. As to quaternary structure, monomer.

The protein localises to the virion. It carries out the reaction ATP + H2O = ADP + phosphate + H(+). In terms of biological role, NTP-dependent helicase that catalyzes unidirectional unwinding of 3'tailed duplex RNAs and plays an important role during transcription of early mRNAs, presumably by preventing R-loop formation behind the elongating RNA polymerase. Might also play a role in the export of newly synthesized mRNA chains out of the core into the cytoplasm. Required for replication and propagation of viral particles. The chain is RNA helicase NPH-II (OPG084) from Homo sapiens (Human).